The chain runs to 178 residues: Cytochrome b6-f complex subunit 4 (178 aa).

3 helical membrane-spanning segments follow: residues 36–56, 95–115, and 131–151; these read LSYI…GLAV, LLGV…PFLE, and TVSL…ALPI.

Belongs to the cytochrome b family. PetD subfamily. As to quaternary structure, the 4 large subunits of the cytochrome b6-f complex are cytochrome b6, subunit IV (17 kDa polypeptide, petD), cytochrome f and the Rieske protein, while the 4 small subunits are petG, petL, petM and petN. The complex functions as a dimer.

It is found in the plastid. The protein resides in the chloroplast thylakoid membrane. Component of the cytochrome b6-f complex, which mediates electron transfer between photosystem II (PSII) and photosystem I (PSI), cyclic electron flow around PSI, and state transitions. The polypeptide is Cytochrome b6-f complex subunit 4 (Picea abies (Norway spruce)).